The chain runs to 394 residues: NAD(P)H-quinone oxidoreductase subunit H (394 aa).

This sequence belongs to the complex I 49 kDa subunit family. In terms of assembly, NDH-1 can be composed of about 15 different subunits; different subcomplexes with different compositions have been identified which probably have different functions.

Its subcellular location is the cellular thylakoid membrane. It catalyses the reaction a plastoquinone + NADH + (n+1) H(+)(in) = a plastoquinol + NAD(+) + n H(+)(out). The catalysed reaction is a plastoquinone + NADPH + (n+1) H(+)(in) = a plastoquinol + NADP(+) + n H(+)(out). Functionally, NDH-1 shuttles electrons from an unknown electron donor, via FMN and iron-sulfur (Fe-S) centers, to quinones in the respiratory and/or the photosynthetic chain. The immediate electron acceptor for the enzyme in this species is believed to be plastoquinone. Couples the redox reaction to proton translocation, and thus conserves the redox energy in a proton gradient. Cyanobacterial NDH-1 also plays a role in inorganic carbon-concentration. The protein is NAD(P)H-quinone oxidoreductase subunit H of Trichodesmium erythraeum (strain IMS101).